Reading from the N-terminus, the 181-residue chain is ATP synthase subunit b (181 aa).

A helical membrane pass occupies residues 12–32 (LPAVYDIVWSAVVFVVLLVVI).

The protein belongs to the ATPase B chain family. F-type ATPases have 2 components, F(1) - the catalytic core - and F(0) - the membrane proton channel. F(1) has five subunits: alpha(3), beta(3), gamma(1), delta(1), epsilon(1). F(0) has three main subunits: a(1), b(2) and c(10-14). The alpha and beta chains form an alternating ring which encloses part of the gamma chain. F(1) is attached to F(0) by a central stalk formed by the gamma and epsilon chains, while a peripheral stalk is formed by the delta and b chains.

The protein resides in the cell membrane. In terms of biological role, f(1)F(0) ATP synthase produces ATP from ADP in the presence of a proton or sodium gradient. F-type ATPases consist of two structural domains, F(1) containing the extramembraneous catalytic core and F(0) containing the membrane proton channel, linked together by a central stalk and a peripheral stalk. During catalysis, ATP synthesis in the catalytic domain of F(1) is coupled via a rotary mechanism of the central stalk subunits to proton translocation. Functionally, component of the F(0) channel, it forms part of the peripheral stalk, linking F(1) to F(0). The polypeptide is ATP synthase subunit b (Clavibacter sepedonicus (Clavibacter michiganensis subsp. sepedonicus)).